A 152-amino-acid polypeptide reads, in one-letter code: Transcriptional regulator MraZ (152 aa).

SpoVT-AbrB domains follow at residues 5–52 and 81–124; these read ATLV…PLPE and ASEC…DETT.

The protein belongs to the MraZ family. As to quaternary structure, forms oligomers.

It is found in the cytoplasm. It localises to the nucleoid. In terms of biological role, negatively regulates its own expression and that of the subsequent genes in the proximal part of the division and cell wall (dcw) gene cluster. Acts by binding directly to DNA. May also regulate the expression of genes outside the dcw cluster. This chain is Transcriptional regulator MraZ, found in Escherichia coli O127:H6 (strain E2348/69 / EPEC).